The chain runs to 579 residues: MIRTWIALVPNDHRARLIGFALLAFCSVVARAVGTVLLVPLMAALFGEAPQRAWLWLGWLSAATVAGWVLDAVTARIGIELGFAVLNHTQHDVADRLPVVRLDWFTAENTATARQAIAATGPELVGLVVNLVTPLTSAILLPAVIALALLPISWQLGVAALAGVPLLLGALWASAAFARRADTAADKANTALTERIIEFARTQQALRAARRVEPARSLVGNALASQHTATMRLLGMQIPGQLLFSIASQLALIVLAGTTAALTITGTLTVPEAIALIVVMVRYLEPFTAVSELAPALESTRATLGRIGSVLTAPVMVAGSGTWRDGAVVPRIEFDDVAFGYDGGSGPVLDGVSFCLQPGTTTAIVGPSGCGKSTILALIAGLHQPTRGRVLIDGTDVATLDARAQQAVCSVVFQHPYLFHGTIRDNVFAADPGASDDQFAQAVRLARVDELIARLPDGANTIVGEAGSALSGGERQRVSIARALLKAAPVLLVDEATSALDAENEAAVVDALAADPRSRTRVIVAHRLASIRHADRVLFVDDGRVVEDGSISELLTAGGRFSQFWRQQHEAAEWQILAE.

Over 1–16 (MIRTWIALVPNDHRAR) the chain is Cytoplasmic. The helical transmembrane segment at 17-37 (LIGFALLAFCSVVARAVGTVL) threads the bilayer. The ABC transmembrane type-1 domain occupies 17–299 (LIGFALLAFC…VSELAPALES (283 aa)). The Periplasmic portion of the chain corresponds to 38-52 (LVPLMAALFGEAPQR). The chain crosses the membrane as a helical span at residues 53–73 (AWLWLGWLSAATVAGWVLDAV). Residues 74-123 (TARIGIELGFAVLNHTQHDVADRLPVVRLDWFTAENTATARQAIAATGPE) are Cytoplasmic-facing. The helical transmembrane segment at 124-146 (LVGLVVNLVTPLTSAILLPAVIA) threads the bilayer. Over 147-155 (LALLPISWQ) the chain is Periplasmic. The helical transmembrane segment at 156 to 178 (LGVAALAGVPLLLGALWASAAFA) threads the bilayer. The Cytoplasmic portion of the chain corresponds to 179–237 (RRADTAADKANTALTERIIEFARTQQALRAARRVEPARSLVGNALASQHTATMRLLGMQ). A helical transmembrane segment spans residues 238–258 (IPGQLLFSIASQLALIVLAGT). Over 259–579 (TAALTITGTL…EAAEWQILAE (321 aa)) the chain is Periplasmic. The region spanning 332-567 (IEFDDVAFGY…GGRFSQFWRQ (236 aa)) is the ABC transporter domain. 366-373 (GPSGCGKS) contacts ATP.

This sequence belongs to the ABC transporter superfamily. Siderophore-Fe(3+) uptake transporter (SIUT) (TC 3.A.1.21) family. In terms of assembly, forms a heterodimer with IrtA.

Its subcellular location is the cell inner membrane. Its function is as follows. Part of the ABC transporter complex IrtAB involved in the import of iron-bound mycobactin (Fe-MBT) and carboxymycobactin (Fe-cMBT). Transmembrane domains (TMD) form a pore in the membrane and the ATP-binding domain (NBD) is responsible for energy generation. The polypeptide is Mycobactin import ATP-binding/permease protein IrtB (irtB) (Mycobacterium bovis (strain ATCC BAA-935 / AF2122/97)).